The primary structure comprises 405 residues: 11-beta-hydroxysteroid dehydrogenase type 2 (405 aa).

Residue 82-111 coordinates NAD(+); the sequence is TRAVLITGCDSGFGKETAKKLDSMGFTVLA. Serine 219 serves as a coordination point for substrate. Residue tyrosine 232 is the Proton acceptor of the active site. Residues 335–339 form an essential for protein stability region; sequence RRRYY. Residues 377-387 are compositionally biased toward low complexity; sequence QPGQPGTTPPQ. The tract at residues 377–405 is disordered; it reads QPGQPGTTPPQDAAQDPNLSPGPSPAVAR. Positions 396-405 are enriched in pro residues; it reads SPGPSPAVAR.

It belongs to the short-chain dehydrogenases/reductases (SDR) family. Interacts with ligand-free cytoplasmic NR3C2. Expressed in kidney, placenta, pancreas, prostate, ovary, small intestine and colon, and in lower levels in the spleen and testis. At midgestation, expressed at high levels in placenta and in fetal kidney and, at much lower levels, in fetal lung and testis.

The protein localises to the microsome. It is found in the endoplasmic reticulum. It carries out the reaction an 11beta-hydroxysteroid + NAD(+) = an 11-oxosteroid + NADH + H(+). The enzyme catalyses cortisol + NAD(+) = cortisone + NADH + H(+). It catalyses the reaction corticosterone + NAD(+) = 11-dehydrocorticosterone + NADH + H(+). The catalysed reaction is 11beta,17beta-dihydroxyandrost-4-ene-3-one + NAD(+) = 17beta-hydroxyandrost-4-ene-3,11-dione + NADH + H(+). It carries out the reaction 11beta-hydroxyandrost-4-ene-3,17-dione + NAD(+) = androst-4-ene-3,11,17-trione + NADH + H(+). The protein operates within steroid metabolism. Inhibited by glycyrrhetinic acid (derived from liquorice). Its function is as follows. Catalyzes the conversion of biologically active 11beta-hydroxyglucocorticoids (11beta-hydroxysteroid) such as cortisol, to inactive 11-ketoglucocorticoids (11-oxosteroid) such as cortisone, in the presence of NAD(+). Functions as a dehydrogenase (oxidase), thereby decreasing the concentration of active glucocorticoids, thus protecting the nonselective mineralocorticoid receptor from occupation by glucocorticoids. Plays an important role in maintaining glucocorticoids balance during preimplantation and protects the fetus from excessive maternal corticosterone exposure. Catalyzes the oxidation of 11beta-hydroxytestosterone (11beta,17beta-dihydroxyandrost-4-ene-3-one) to 11-ketotestosterone (17beta-hydroxyandrost-4-ene-3,11-dione), a major bioactive androgen. Catalyzes the conversion of 11beta-hydroxyandrostenedione (11beta-hydroxyandrost-4-ene-3,17-dione) to 11-ketoandrostenedione (androst-4-ene-3,11,17-trione), which can be further metabolized to 11-ketotestosterone. Converts 7-beta-25-dihydroxycholesterol to 7-oxo-25-hydroxycholesterol in vitro. 7-beta-25-dihydroxycholesterol (not 7-oxo-25-hydroxycholesterol) acts as a ligand for the G-protein-coupled receptor (GPCR) Epstein-Barr virus-induced gene 2 (EBI2) and may thereby regulate immune cell migration. May protect ovulating oocytes and fertilizing spermatozoa from the adverse effects of cortisol. In Homo sapiens (Human), this protein is 11-beta-hydroxysteroid dehydrogenase type 2.